The sequence spans 1045 residues: Protein transport protein Sec16B (1045 aa).

Pro residues predominate over residues 1–13 (MEPWVPQWPPPSR). Positions 1-78 (MEPWVPQWPP…PQHVPRLGAW (78 aa)) are disordered. The span at 22–33 (DSERGLQRDGYH) shows a compositional bias: basic and acidic residues. Polar residues predominate over residues 50–60 (QDVQGSPQPQQ). 2 positions are modified to phosphoserine: S55 and S137. The segment covering 149–168 (RHLSEHRPENQSRTFRRDSE) has biased composition (basic and acidic residues). 4 disordered regions span residues 149 to 193 (RHLS…QERP), 707 to 733 (QQKA…TTES), 748 to 789 (APGC…YSVP), and 813 to 1045 (QTHS…TQPC). At S186 the chain carries Phosphoserine. Residues 267 to 711 (APKKFYIPHV…RHQELQQKAA (445 aa)) form a central conserved domain (CCD); required for localization to endoplasmic reticulum exit sites region. Positions 773 to 784 (GPAAGPAGAPVP) are enriched in low complexity. 4 positions are modified to phosphoserine: S852, S858, S866, and S867. Positions 916–926 (EDSSDSPDSEQ) are enriched in acidic residues. Over residues 942–953 (SPPPLLESPPLP) the composition is skewed to pro residues. Residues 957–966 (AFGGGTGRGE) are compositionally biased toward gly residues. The span at 989-998 (ESASSELYSN) shows a compositional bias: polar residues.

It belongs to the SEC16 family. In terms of assembly, SEC16A and SEC16B are each present in multiple copies in a heteromeric complex. Interacts with TFG. Interacts with SEC13. Liver.

It is found in the endoplasmic reticulum membrane. It localises to the golgi apparatus membrane. In terms of biological role, plays a role in the organization of the endoplasmic reticulum exit sites (ERES), also known as transitional endoplasmic reticulum (tER). Required for secretory cargo traffic from the endoplasmic reticulum to the Golgi apparatus. Involved in peroxisome biogenesis. Regulates the transport of peroxisomal biogenesis factors PEX3 and PEX16 from the ER to peroxisomes. This Oryctolagus cuniculus (Rabbit) protein is Protein transport protein Sec16B (SEC16B).